A 175-amino-acid polypeptide reads, in one-letter code: Large ribosomal subunit protein uL22 (175 aa).

Residues 113–175 form a disordered region; that stretch reads VESRPVKDQR…EASETKGGSD (63 aa). A compositionally biased stretch (low complexity) spans 136–154; that stretch reads KTAGRAPAKKAGASSGATK. The span at 166-175 shows a compositional bias: basic and acidic residues; the sequence is EASETKGGSD.

It belongs to the universal ribosomal protein uL22 family. Part of the 50S ribosomal subunit.

This protein binds specifically to 23S rRNA; its binding is stimulated by other ribosomal proteins, e.g. L4, L17, and L20. It is important during the early stages of 50S assembly. It makes multiple contacts with different domains of the 23S rRNA in the assembled 50S subunit and ribosome. Its function is as follows. The globular domain of the protein is located near the polypeptide exit tunnel on the outside of the subunit, while an extended beta-hairpin is found that lines the wall of the exit tunnel in the center of the 70S ribosome. This Mycobacterium leprae (strain TN) protein is Large ribosomal subunit protein uL22.